Reading from the N-terminus, the 108-residue chain is Urease subunit beta (108 aa).

This sequence belongs to the urease beta subunit family. Heterotrimer of UreA (gamma), UreB (beta) and UreC (alpha) subunits. Three heterotrimers associate to form the active enzyme.

It localises to the cytoplasm. It catalyses the reaction urea + 2 H2O + H(+) = hydrogencarbonate + 2 NH4(+). It participates in nitrogen metabolism; urea degradation; CO(2) and NH(3) from urea (urease route): step 1/1. The sequence is that of Urease subunit beta from Chromohalobacter salexigens (strain ATCC BAA-138 / DSM 3043 / CIP 106854 / NCIMB 13768 / 1H11).